Consider the following 774-residue polypeptide: FT-interacting protein 7 (774 aa).

Over residues 1–17 (MMQRPFRPEEYSLKETS) the composition is skewed to basic and acidic residues. The interval 1-25 (MMQRPFRPEEYSLKETSPHLGGGAA) is disordered. C2 domains follow at residues 23–143 (GAAG…PQWY), 182–305 (IPGD…SQWY), and 346–472 (YSSD…THAY). 5 residues coordinate Ca(2+): D56, D62, D109, D111, and D116. Helical transmembrane passes span 575 to 595 (IMGV…ICHW), 606 to 626 (ILFV…FLYL), and 714 to 734 (ATAL…VTPF).

The protein belongs to the MCTP family. In terms of assembly, interacts with OSH1. Ca(2+) is required as a cofactor. Expressed in roots, stems, lemma, palea, pistils and ovules. Expressed at low levels in leaves.

The protein resides in the cell membrane. In terms of biological role, promotes nuclear translocation of the transcription factor OSH1, which directly suppresses the auxin biosynthetic gene YUCCA4 during the late development of anthers. Reduction of auxin levels at late stage of anther development, after meiosis of microspore mother cells, is necessary for normal anther dehiscence and seed setting. Required for jasmonate (JA) biosynthetic genes expression and JA production in anthers. The chain is FT-interacting protein 7 from Oryza sativa subsp. japonica (Rice).